The primary structure comprises 256 residues: DNA repair protein RecO (256 aa).

Belongs to the RecO family.

In terms of biological role, involved in DNA repair and RecF pathway recombination. In Bacillus pumilus (strain SAFR-032), this protein is DNA repair protein RecO.